Consider the following 216-residue polypeptide: [5-(aminomethyl)furan-3-yl]methyl phosphate kinase (216 aa).

Residues 5–9 (KIGGS), glycine 39, aspartate 142, 147–152 (YDKFPG), and glycine 166 each bind ATP.

The protein belongs to the MfnE family. In terms of assembly, homotrimer. Mg(2+) serves as cofactor.

It catalyses the reaction [5-(aminomethyl)-3-furyl]methyl phosphate + ATP = [5-(aminomethyl)furan-3-yl]methyl diphosphate + ADP. The protein operates within cofactor biosynthesis; methanofuran biosynthesis. With respect to regulation, inhibited by EDTA. Catalyzes the formation of 5-(aminomethyl)-3-furanmethanol diphosphate (F1-PP) from 5-(aminomethyl)-3-furanmethanol phosphate (F1-P) and ATP. In vitro, can also act as an adenylate kinase that catalyzes the transfer of a phosphoryl group from ATP to AMP, generating two molecules of ADP. The protein is [5-(aminomethyl)furan-3-yl]methyl phosphate kinase of Methanocaldococcus jannaschii (strain ATCC 43067 / DSM 2661 / JAL-1 / JCM 10045 / NBRC 100440) (Methanococcus jannaschii).